The chain runs to 1783 residues: 6-methylsalicylic acid synthase (1783 aa).

Residues 1–31 (MITSTSSTEVLTPANGSDDSKGTTTPATSSG) show a composition bias toward polar residues. The tract at residues 1-40 (MITSTSSTEVLTPANGSDDSKGTTTPATSSGDPEMHDDLL) is disordered. Positions 45-474 (HDDVAIIGMA…GTVSHAIIEA (430 aa)) constitute a Ketosynthase family 3 (KS3) domain. Residues C217, H352, and H394 each act as for beta-ketoacyl synthase activity in the active site. A malonyl-CoA:ACP transacylase (MAT) domain region spans residues 587–884 (WVFSGHGAQW…TPTMVRKQPA (298 aa)). The active-site For acyl/malonyl transferase activity is the S673. Residues 942–1215 (THKPAANDLL…AFAGVEGESL (274 aa)) are product template (PT) domain. Residues 948–1064 (NDLLGTRTAL…ATVGADATPS (117 aa)) are N-terminal hotdog fold. The 269-residue stretch at 948–1216 (NDLLGTRTAL…FAGVEGESLS (269 aa)) folds into the PKS/mFAS DH domain. The active-site Proton acceptor; for dehydratase activity is H980. The segment at 1078–1216 (PQKLSDSFSI…FAGVEGESLS (139 aa)) is C-terminal hotdog fold. D1130 serves as the catalytic Proton donor; for dehydratase activity. In terms of domain architecture, Carrier spans 1707–1781 (EYVLVVVKKC…HLVEYFCQVL (75 aa)). The residue at position 1741 (S1741) is an O-(pantetheine 4'-phosphoryl)serine.

The catalysed reaction is 3 malonyl-CoA + acetyl-CoA + NADPH + 3 H(+) = 6-methylsalicylate + 3 CO2 + NADP(+) + 4 CoA + H2O. The protein operates within secondary metabolite biosynthesis; terpenoid biosynthesis. In terms of biological role, non-reducing polyketide synthase; part of the gene cluster that mediates the biosynthesis of macrophorins, isoprenoid epoxycyclohexenones containing cyclized drimane moieties. The first step of the pathway is the synthesis of 6-methylsalicylic acid (6-MSA) by the polyketide synthase macA. 6-MSA is then converted to m-cresol by the decarboxylase macB. The cytochrome P450 monooxygenase macC then catalyzes the oxidation of m-cresol to toluquinol. Epoxidation of toluquinol is then performed by the short chain dehydrogenase macD, with the help of macE, and a further prenylation by macG leads to 7-deacetoxyyanuthone A. The next step is the hydroxylation of C-22 of 7-deacetoxyyanuthone A by the cytochrome P450 monooxygenase macH to yield 22-deacetylyanuthone A. O-Mevalon transferase macI then attaches mevalon to the hydroxyl group of 22-deacetylyanuthone A to produce yanuthone E. The terpene cyclase macJ catalyzes the cyclization of 22-deacetylyanuthone A to macrophorin A. MacJ is also able to catalyze cyclization of yanuthone E and 7-deacetoxyyanuthone A to their corresponding macrophorins. The macJ products can be further modified by macH and macJ, as well as by the FAD-dependent monooxygenase macF, to produce additional macrophorins, including 4'-oxomacrophorin A, 4'-oxomacrophorin D and 4'-oxomacrophorin E. The protein is 6-methylsalicylic acid synthase of Penicillium terrestre.